The primary structure comprises 378 residues: Cytochrome b (378 aa).

The next 4 membrane-spanning stretches (helical) occupy residues 35–55 (FGSL…FLAM), 79–101 (WIIR…CHIG), 114–134 (TWIM…LGYV), and 180–200 (FFSL…LHIF). 2 residues coordinate heme b: H85 and H99. Heme b-binding residues include H184 and H198. Residue H203 participates in a ubiquinone binding. A run of 4 helical transmembrane segments spans residues 226-246 (YSAK…FISF), 290-310 (LGGV…PLTH), 326-346 (FFWL…QPVC), and 350-370 (VMCS…CGPL).

Belongs to the cytochrome b family. In terms of assembly, the main subunits of complex b-c1 are: cytochrome b, cytochrome c1 and the Rieske protein. Heme b serves as cofactor.

Its subcellular location is the mitochondrion inner membrane. Functionally, component of the ubiquinol-cytochrome c reductase complex (complex III or cytochrome b-c1 complex) that is part of the mitochondrial respiratory chain. The b-c1 complex mediates electron transfer from ubiquinol to cytochrome c. Contributes to the generation of a proton gradient across the mitochondrial membrane that is then used for ATP synthesis. The protein is Cytochrome b (mt:Cyt-b) of Paraspadella gotoi (Arrow worm).